A 1033-amino-acid chain; its full sequence is MDSRLNRIQSKMKLWIKDKNLSNPSIPLKVLNKSFRSSRQSSVSNGHGLYSLDRDETESLMSSHEASNAGISLDSSFRVIQVGQPEPQYGNNAVTNTKYDLFTFLPKCLYEQFRYFYNMYFLLVSLSQLIPPLKIGYLSTYIAPLIFVLLITLTKEAVDDLKRRRRDSYANNEIYTVNDSPCAAQNIQAGDVVYIAKDQRIPADMILLETTVGNEAFIRTDQLDGETDWKLRIPCSNQHTEGIVHADAPIKSVHHFYGTFTLNNQKRPISVDHTLWANTVLASDGVYGVVVYTGKDTRQSMNSSKAKTKVGLLEKEINFYSKILCTFVLVLSIGLTFSHGIKTDWYISVFRYLILFSSIIPINLRVNLDLAKIVHSKNTESDPNLPGVVVRSSNIPEELGRIEYVLTDKTGTLTQNEMEMKKLHVGTMGFSAESMDVVQACIQNYSTPIPLSEDSKTLVRNLVLALSLCHNVTPSKGHDGVVSYQAASPDEVAIVKWTSTLGLVLTNRTRDAITLNNNVYKILNIFPFKSETKRMGIIVQSPDEKITFYLKGADSIMQNFVKPSFWLEEECGNLAREGLRTLVVAKKDLSAEEYSAFSLAHSDASLSFSNSRDKKMEEIVSRYLENDMDLLGLTGVEDKLQKDVKITLELLRNAGIHVWMLTGDKVETARCIAISSRLVSRGQYIHTINQLSSREEAHNHLLTLRNKPDSCLIIDGESMEFCIGYLQNEFIDIVSDLSSVVICRCTPTQKANMTRLIQEKKQASVCCIGDGGNDVGMIQVANVGIGIVGKEGQQASLAADYSVKEFSHVSRLLLWHGRISYKQTSKLAMFVIHRGLLISVCQVVYSVISAFEPIALFQGLLLVGYSTMYTMLPVFSIVYDRDVSEKLVFLFPELYKEMREQKCFSYKNFISCVLISVYQGLIIQLFTFYLIGFEEEGKMLAVCFSCLIFNELIMVALQINTWEQTIVMSELLTLMMYILSVPFLTNYFELKFLLGLKFYWVSALILFISLLPVWCGKALKRKLKPSSYAKLQR.

4 consecutive transmembrane segments (helical) span residues 133 to 153 (LKIG…LITL), 274 to 294 (TLWA…VYTG), 317 to 337 (INFY…GLTF), and 344 to 364 (DWYI…PINL). The active-site 4-aspartylphosphate intermediate is Asp-408. Residues Asp-408, Lys-409, Thr-410, Glu-491, Phe-528, Ser-530, Lys-533, Lys-551, Arg-580, Thr-581, Thr-662, Gly-663, Asp-664, Arg-744, and Lys-750 each contribute to the ATP site. Residue Asp-408 coordinates Mg(2+). Residue Thr-410 participates in Mg(2+) binding. The next 6 membrane-spanning stretches (helical) occupy residues 768-788 (IGDG…IGIV), 843-863 (VVYS…LLLV), 913-933 (VLIS…LIGF), 939-959 (MLAV…ALQI), 965-985 (TIVM…PFLT), and 992-1012 (FLLG…SLLP). Asp-770 is a binding site for Mg(2+). Residues Asn-773 and Asp-774 each contribute to the ATP site. Asp-774 serves as a coordination point for Mg(2+).

It belongs to the cation transport ATPase (P-type) (TC 3.A.3) family. Type IV subfamily. As to quaternary structure, functions without a CDC50/LEM3 family accessory subunit. Mg(2+) is required as a cofactor.

The protein resides in the endosome membrane. It localises to the golgi apparatus membrane. The enzyme catalyses ATP + H2O + phospholipidSide 1 = ADP + phosphate + phospholipidSide 2.. It catalyses the reaction a 1,2-diacyl-sn-glycero-3-phospho-L-serine(out) + ATP + H2O = a 1,2-diacyl-sn-glycero-3-phospho-L-serine(in) + ADP + phosphate + H(+). The catalysed reaction is a 1,2-diacyl-sn-glycero-3-phosphoethanolamine(out) + ATP + H2O = a 1,2-diacyl-sn-glycero-3-phosphoethanolamine(in) + ADP + phosphate + H(+). Its function is as follows. Flippase that catalyzes the hydrolysis of ATP coupled to the transport of lysophosphatidylserine, phosphatidylethanolamine, and phosphatidylserine from the lumenal to the cytosolic leaflet of the Golgi apparatus membrane and ensures the maintenance of asymmetric distribution of phospholipids. In Schizosaccharomyces pombe (strain 972 / ATCC 24843) (Fission yeast), this protein is Phospholipid-transporting ATPase neo1.